Reading from the N-terminus, the 206-residue chain is Phosphoribosylglycinamide formyltransferase (206 aa).

Residue 13–15 coordinates N(1)-(5-phospho-beta-D-ribosyl)glycinamide; sequence GTN. Residues 99 to 102 and asparagine 121 contribute to the (6R)-10-formyltetrahydrofolate site; that span reads MIIL. The Proton donor role is filled by histidine 123. (6R)-10-formyltetrahydrofolate is bound at residue aspartate 163. N(1)-(5-phospho-beta-D-ribosyl)glycinamide is bound at residue glutamate 192.

Belongs to the GART family.

It carries out the reaction N(1)-(5-phospho-beta-D-ribosyl)glycinamide + (6R)-10-formyltetrahydrofolate = N(2)-formyl-N(1)-(5-phospho-beta-D-ribosyl)glycinamide + (6S)-5,6,7,8-tetrahydrofolate + H(+). The protein operates within purine metabolism; IMP biosynthesis via de novo pathway; N(2)-formyl-N(1)-(5-phospho-D-ribosyl)glycinamide from N(1)-(5-phospho-D-ribosyl)glycinamide (10-formyl THF route): step 1/1. This Dictyostelium discoideum (Social amoeba) protein is Phosphoribosylglycinamide formyltransferase (purN).